The sequence spans 255 residues: Taurine import ATP-binding protein TauB (255 aa).

The 228-residue stretch at 2–229 (LQISHLYADY…RFVAGESSRS (228 aa)) folds into the ABC transporter domain. 34–41 (GPSGCGKT) contacts ATP.

This sequence belongs to the ABC transporter superfamily. Taurine importer (TC 3.A.1.17.1) family. The complex is composed of two ATP-binding proteins (TauB), two transmembrane proteins (TauC) and a solute-binding protein (TauA).

The protein resides in the cell inner membrane. The enzyme catalyses taurine(out) + ATP + H2O = taurine(in) + ADP + phosphate + H(+). Its function is as follows. Part of the ABC transporter complex TauABC involved in taurine import. Responsible for energy coupling to the transport system. This chain is Taurine import ATP-binding protein TauB, found in Shigella dysenteriae serotype 1 (strain Sd197).